Consider the following 235-residue polypeptide: Sugar fermentation stimulation protein homolog (235 aa).

This sequence belongs to the SfsA family.

This is Sugar fermentation stimulation protein homolog from Azotobacter vinelandii (strain DJ / ATCC BAA-1303).